A 51-amino-acid polypeptide reads, in one-letter code: Large ribosomal subunit protein bL33 (51 aa).

The protein belongs to the bacterial ribosomal protein bL33 family.

The polypeptide is Large ribosomal subunit protein bL33 (Pseudomonas putida (strain ATCC 47054 / DSM 6125 / CFBP 8728 / NCIMB 11950 / KT2440)).